A 324-amino-acid chain; its full sequence is Endochitinase A2 (324 aa).

The signal sequence occupies residues 1–20 (MSKLRIPILLVLFIVSCCSA). Positions 21 to 61 (EQCGTQAGGALCPGGLCCSKFGWCGSTSEYCGDGCQSQCSG) constitute a Chitin-binding type-1 domain. 4 disulfides stabilise this stretch: Cys-23–Cys-38, Cys-32–Cys-44, Cys-37–Cys-51, and Cys-55–Cys-59. Residue Glu-133 is the Proton donor of the active site. 2 cysteine pairs are disulfide-bonded: Cys-151-Cys-170 and Cys-269-Cys-301. Residues 310–324 (SLPLSSILLDTVAAA) constitute a propeptide, removed in mature form.

It belongs to the glycosyl hydrolase 19 family. Chitinase class I subfamily.

The enzyme catalyses Random endo-hydrolysis of N-acetyl-beta-D-glucosaminide (1-&gt;4)-beta-linkages in chitin and chitodextrins.. Defense against chitin-containing fungal pathogens. The chain is Endochitinase A2 (CHI2) from Pisum sativum (Garden pea).